Consider the following 127-residue polypeptide: Aspartate 1-decarboxylase (127 aa).

Residue S25 is the Schiff-base intermediate with substrate; via pyruvic acid of the active site. S25 bears the Pyruvic acid (Ser) mark. Substrate is bound at residue T57. Y58 functions as the Proton donor in the catalytic mechanism. 73 to 75 (GAA) is a binding site for substrate.

Belongs to the PanD family. In terms of assembly, heterooctamer of four alpha and four beta subunits. Pyruvate is required as a cofactor. Is synthesized initially as an inactive proenzyme, which is activated by self-cleavage at a specific serine bond to produce a beta-subunit with a hydroxyl group at its C-terminus and an alpha-subunit with a pyruvoyl group at its N-terminus.

It is found in the cytoplasm. It catalyses the reaction L-aspartate + H(+) = beta-alanine + CO2. It participates in cofactor biosynthesis; (R)-pantothenate biosynthesis; beta-alanine from L-aspartate: step 1/1. Catalyzes the pyruvoyl-dependent decarboxylation of aspartate to produce beta-alanine. This chain is Aspartate 1-decarboxylase, found in Bacillus cytotoxicus (strain DSM 22905 / CIP 110041 / 391-98 / NVH 391-98).